A 209-amino-acid polypeptide reads, in one-letter code: Thiamine-phosphate synthase (209 aa).

Residues 35-39 (QLRNK) and Asn67 contribute to the 4-amino-2-methyl-5-(diphosphooxymethyl)pyrimidine site. Residues Asp68 and Asp87 each contribute to the Mg(2+) site. Position 106 (Ser106) interacts with 4-amino-2-methyl-5-(diphosphooxymethyl)pyrimidine. Position 132–134 (132–134 (TGS)) interacts with 2-[(2R,5Z)-2-carboxy-4-methylthiazol-5(2H)-ylidene]ethyl phosphate. Lys135 is a 4-amino-2-methyl-5-(diphosphooxymethyl)pyrimidine binding site. 2-[(2R,5Z)-2-carboxy-4-methylthiazol-5(2H)-ylidene]ethyl phosphate is bound by residues Gly163 and 183–184 (IS).

This sequence belongs to the thiamine-phosphate synthase family. The cofactor is Mg(2+).

It catalyses the reaction 2-[(2R,5Z)-2-carboxy-4-methylthiazol-5(2H)-ylidene]ethyl phosphate + 4-amino-2-methyl-5-(diphosphooxymethyl)pyrimidine + 2 H(+) = thiamine phosphate + CO2 + diphosphate. It carries out the reaction 2-(2-carboxy-4-methylthiazol-5-yl)ethyl phosphate + 4-amino-2-methyl-5-(diphosphooxymethyl)pyrimidine + 2 H(+) = thiamine phosphate + CO2 + diphosphate. The enzyme catalyses 4-methyl-5-(2-phosphooxyethyl)-thiazole + 4-amino-2-methyl-5-(diphosphooxymethyl)pyrimidine + H(+) = thiamine phosphate + diphosphate. The protein operates within cofactor biosynthesis; thiamine diphosphate biosynthesis; thiamine phosphate from 4-amino-2-methyl-5-diphosphomethylpyrimidine and 4-methyl-5-(2-phosphoethyl)-thiazole: step 1/1. Its function is as follows. Condenses 4-methyl-5-(beta-hydroxyethyl)thiazole monophosphate (THZ-P) and 2-methyl-4-amino-5-hydroxymethyl pyrimidine pyrophosphate (HMP-PP) to form thiamine monophosphate (TMP). The protein is Thiamine-phosphate synthase of Chlorobium phaeovibrioides (strain DSM 265 / 1930) (Prosthecochloris vibrioformis (strain DSM 265)).